The following is a 123-amino-acid chain: Glycophorin-B (123 aa).

The first 19 residues, 1–19 (MYGKIIFVLLLSEIVSISA), serve as a signal peptide directing secretion. Residues 93–113 (VVIILIILCVMAGVIGTILLI) form a helical membrane-spanning segment.

The protein belongs to the glycophorin-A family. In terms of assembly, component of the ankyrin-1 complex in the erythrocyte, composed of ANK1, RHCE, RHAG, SLC4A1, EPB42, GYPA, GYPB and AQP1. Interacts (via the N-terminal) with RHAG; this interaction bridges the (RHAG)2(RHCE) heterotrimer with the SLC4A1 Band 3 I dimer complexed with GYPA. The N-terminal extracellular domain is heavily glycosylated on serine and threonine residues.

It is found in the cell membrane. Its function is as follows. Component of the ankyrin-1 complex, a multiprotein complex involved in the stability and shape of the erythrocyte membrane. This is Glycophorin-B from Pan troglodytes (Chimpanzee).